We begin with the raw amino-acid sequence, 297 residues long: UDP-N-acetylenolpyruvoylglucosamine reductase (297 aa).

The FAD-binding PCMH-type domain occupies 22–195 (RAGGTARYYA…LAGRFRLQRG (174 aa)). Arg169 is an active-site residue. Ser223 acts as the Proton donor in catalysis. Glu293 is a catalytic residue.

Belongs to the MurB family. FAD is required as a cofactor.

The protein resides in the cytoplasm. It catalyses the reaction UDP-N-acetyl-alpha-D-muramate + NADP(+) = UDP-N-acetyl-3-O-(1-carboxyvinyl)-alpha-D-glucosamine + NADPH + H(+). The protein operates within cell wall biogenesis; peptidoglycan biosynthesis. Its function is as follows. Cell wall formation. The sequence is that of UDP-N-acetylenolpyruvoylglucosamine reductase from Chloroflexus aurantiacus (strain ATCC 29364 / DSM 637 / Y-400-fl).